The chain runs to 643 residues: MQLSWKDIPTVAPANDLLDIVLNRTQRKTPTVIRPGFNITRIRAFYMRKVKFTGEGFVEKFDDILKGFPNINDVHPFHRDLMDTLYEKNHFKVSLAAVSRAKTLVEQVERDYTRLLKFGQSLFQCKQLKRAALGRMATIVKKLKDPLVYLEQVRQHLGRMPSIDPNTRTLLICGYPNVGKSSFLRCITKADVEVQPYAFTTKSLYVGHFDYKYLRFQAIDTPGILDRPTDEMNNVEMQSIYAIAHLRSTVMYFMDLSEQCGFSIEAQVKLFHSIKPLFANKSVMVVINKTDIIKPEDLDEERKKLLDTVLEVPGVEIMTTSCHEEDNVMAVRNKACEKLLASRIENKLKSQARITNVLNKIHVAQPQKRDDGIDRTPYIPEAIAKMKKYDPEDPNRRKLAKEIEIENGGAGVYNVNLKDKYLLEDDEWKNDVMPEILDGKNVYDFLDPEIAIKLQALEEEEERLESEGFYESDEEETYEGFDADEISEIREKAEWIRDRQKKMINASRNRKALKNRGTMPRSKLAKTYGDMEKHMSSLGHDMTALQDKQRVAAEKNRYEQTGADVVYGDQEDSAPAGKLRQTDRLTDGVADGSMRSKAERMAKLERRERNRMARAGESDRHATASLPKHLFSGKRGVGKTDFR.

The OBG-type G domain occupies 168–340 (RTLLICGYPN…VRNKACEKLL (173 aa)). Residues 174–181 (GYPNVGKS), 220–224 (DTPGI), and 288–291 (NKTD) contribute to the GTP site. The segment at 568–643 (GDQEDSAPAG…KRGVGKTDFR (76 aa)) is disordered. Positions 594-622 (MRSKAERMAKLERRERNRMARAGESDRHA) are enriched in basic and acidic residues.

Belongs to the TRAFAC class OBG-HflX-like GTPase superfamily. OBG GTPase family. NOG subfamily.

The protein localises to the nucleus. The protein resides in the nucleolus. In terms of biological role, involved in the biogenesis of the 60S ribosomal subunit. This Kluyveromyces lactis (strain ATCC 8585 / CBS 2359 / DSM 70799 / NBRC 1267 / NRRL Y-1140 / WM37) (Yeast) protein is Nucleolar GTP-binding protein 1 (NOG1).